The sequence spans 344 residues: UDP-3-O-acylglucosamine N-acyltransferase (344 aa).

His-236 acts as the Proton acceptor in catalysis.

Belongs to the transferase hexapeptide repeat family. LpxD subfamily. In terms of assembly, homotrimer.

It carries out the reaction a UDP-3-O-[(3R)-3-hydroxyacyl]-alpha-D-glucosamine + a (3R)-hydroxyacyl-[ACP] = a UDP-2-N,3-O-bis[(3R)-3-hydroxyacyl]-alpha-D-glucosamine + holo-[ACP] + H(+). Its pathway is bacterial outer membrane biogenesis; LPS lipid A biosynthesis. Its function is as follows. Catalyzes the N-acylation of UDP-3-O-acylglucosamine using 3-hydroxyacyl-ACP as the acyl donor. Is involved in the biosynthesis of lipid A, a phosphorylated glycolipid that anchors the lipopolysaccharide to the outer membrane of the cell. In Nitratidesulfovibrio vulgaris (strain ATCC 29579 / DSM 644 / CCUG 34227 / NCIMB 8303 / VKM B-1760 / Hildenborough) (Desulfovibrio vulgaris), this protein is UDP-3-O-acylglucosamine N-acyltransferase.